Consider the following 244-residue polypeptide: 5-oxoprolinase subunit A (244 aa).

It belongs to the LamB/PxpA family. As to quaternary structure, forms a complex composed of PxpA, PxpB and PxpC.

It carries out the reaction 5-oxo-L-proline + ATP + 2 H2O = L-glutamate + ADP + phosphate + H(+). Catalyzes the cleavage of 5-oxoproline to form L-glutamate coupled to the hydrolysis of ATP to ADP and inorganic phosphate. In Salmonella arizonae (strain ATCC BAA-731 / CDC346-86 / RSK2980), this protein is 5-oxoprolinase subunit A.